Consider the following 989-residue polypeptide: ATP-dependent 6-phosphofructokinase subunit alpha (989 aa).

Positions 1–585 (MPEPSISDLS…SYENFLSVSK (585 aa)) are N-terminal catalytic PFK domain 1. ATP-binding positions include Gly-220, 283-284 (RC), and 313-316 (GDGS). Asp-314 is a Mg(2+) binding site. Beta-D-fructose 6-phosphate is bound by residues 359-361 (SID), Arg-396, 403-405 (MGR), Glu-460, Arg-487, and 493-496 (HVQR). The active-site Proton acceptor is the Asp-361. Residues 586–599 (YDDGSYLVPESSRL) are interdomain linker. The interval 600-989 (NIAIIHVGAP…LSGRLSIRTT (390 aa)) is C-terminal regulatory PFK domain 2. Beta-D-fructose 2,6-bisphosphate is bound by residues Arg-670, 727–731 (TVSNN), Arg-765, 772–774 (QGG), Glu-832, Arg-858, 864–867 (HVQQ), and Arg-963.

The protein belongs to the phosphofructokinase type A (PFKA) family. ATP-dependent PFK group I subfamily. Eukaryotic two domain clade 'E' sub-subfamily. In terms of assembly, heterododecamer of 4 alpha, 4 beta and 4 gamma chains. Mg(2+) is required as a cofactor.

The protein localises to the cytoplasm. It carries out the reaction beta-D-fructose 6-phosphate + ATP = beta-D-fructose 1,6-bisphosphate + ADP + H(+). It functions in the pathway carbohydrate degradation; glycolysis; D-glyceraldehyde 3-phosphate and glycerone phosphate from D-glucose: step 3/4. Allosterically activated by ADP, AMP, or fructose 2,6-bisphosphate, and allosterically inhibited by ATP or citrate. Its function is as follows. Catalyzes the phosphorylation of D-fructose 6-phosphate to fructose 1,6-bisphosphate by ATP, the first committing step of glycolysis. The polypeptide is ATP-dependent 6-phosphofructokinase subunit alpha (PFK1) (Komagataella pastoris (Yeast)).